The following is a 185-amino-acid chain: MKNVIDFVIISGYWPPAGGFGLNANLLETNLINSGVVLGLPVYSGKGVLSNLLNNRKQTILSTIRDAEERYEEATDKLKQARTRLQQAKIKADEIRINGLSRMEGEKQDLVDSADGNSKRLEDSKNATIRFEEQRAIEQVRQQVSRLALERALEVLNIRLNSELQSRMIDYHIDLLVRAAENTTD.

Residues 31–49 (LINSGVVLGLPVYSGKGVL) traverse the membrane as a helical segment.

The protein belongs to the ATPase B chain family. F-type ATPases have 2 components, F(1) - the catalytic core - and F(0) - the membrane proton channel. F(1) has five subunits: alpha(3), beta(3), gamma(1), delta(1), epsilon(1). F(0) has four main subunits: a(1), b(1), b'(1) and c(10-14). The alpha and beta chains form an alternating ring which encloses part of the gamma chain. F(1) is attached to F(0) by a central stalk formed by the gamma and epsilon chains, while a peripheral stalk is formed by the delta, b and b' chains.

It is found in the plastid. The protein resides in the chloroplast thylakoid membrane. Its function is as follows. F(1)F(0) ATP synthase produces ATP from ADP in the presence of a proton or sodium gradient. F-type ATPases consist of two structural domains, F(1) containing the extramembraneous catalytic core and F(0) containing the membrane proton channel, linked together by a central stalk and a peripheral stalk. During catalysis, ATP synthesis in the catalytic domain of F(1) is coupled via a rotary mechanism of the central stalk subunits to proton translocation. Functionally, component of the F(0) channel, it forms part of the peripheral stalk, linking F(1) to F(0). This is ATP synthase subunit b, chloroplastic from Huperzia lucidula (Shining clubmoss).